A 381-amino-acid polypeptide reads, in one-letter code: 1-deoxy-D-xylulose 5-phosphate reductoisomerase (381 aa).

8 residues coordinate NADPH: Thr10, Gly11, Ser12, Ile13, Gly36, Lys37, Asn38, and Asn122. Lys123 is a 1-deoxy-D-xylulose 5-phosphate binding site. Residue Glu124 coordinates NADPH. Asp148 lines the Mn(2+) pocket. Residues Ser149, Glu150, Ser173, and His196 each contribute to the 1-deoxy-D-xylulose 5-phosphate site. Position 150 (Glu150) interacts with Mn(2+). Gly202 serves as a coordination point for NADPH. Residues Ser209, Asn214, Lys215, and Glu218 each coordinate 1-deoxy-D-xylulose 5-phosphate. Glu218 serves as a coordination point for Mn(2+).

The protein belongs to the DXR family. Mg(2+) serves as cofactor. Requires Mn(2+) as cofactor.

The enzyme catalyses 2-C-methyl-D-erythritol 4-phosphate + NADP(+) = 1-deoxy-D-xylulose 5-phosphate + NADPH + H(+). Its pathway is isoprenoid biosynthesis; isopentenyl diphosphate biosynthesis via DXP pathway; isopentenyl diphosphate from 1-deoxy-D-xylulose 5-phosphate: step 1/6. In terms of biological role, catalyzes the NADPH-dependent rearrangement and reduction of 1-deoxy-D-xylulose-5-phosphate (DXP) to 2-C-methyl-D-erythritol 4-phosphate (MEP). The protein is 1-deoxy-D-xylulose 5-phosphate reductoisomerase of Desulfitobacterium hafniense (strain Y51).